Reading from the N-terminus, the 438-residue chain is 23S rRNA (uracil(1939)-C(5))-methyltransferase RlmD (438 aa).

Positions 9–68 (RRTVNRHIITVTADNLDAQGQGVARHQGKTIFVAGLLPGEQAQVQLTEEKRQFAKAKLVK) constitute a TRAM domain. [4Fe-4S] cluster is bound by residues C81, C87, C90, and C168. S-adenosyl-L-methionine is bound by residues Q272, F301, N306, E322, N349, and D370. C396 acts as the Nucleophile in catalysis.

It belongs to the class I-like SAM-binding methyltransferase superfamily. RNA M5U methyltransferase family. RlmD subfamily.

It carries out the reaction uridine(1939) in 23S rRNA + S-adenosyl-L-methionine = 5-methyluridine(1939) in 23S rRNA + S-adenosyl-L-homocysteine + H(+). Functionally, catalyzes the formation of 5-methyl-uridine at position 1939 (m5U1939) in 23S rRNA. The protein is 23S rRNA (uracil(1939)-C(5))-methyltransferase RlmD of Photorhabdus laumondii subsp. laumondii (strain DSM 15139 / CIP 105565 / TT01) (Photorhabdus luminescens subsp. laumondii).